The sequence spans 92 residues: DNA-directed RNA polymerase subunit omega (92 aa).

This sequence belongs to the RNA polymerase subunit omega family. The RNAP catalytic core consists of 2 alpha, 1 beta, 1 beta' and 1 omega subunit. When a sigma factor is associated with the core the holoenzyme is formed, which can initiate transcription.

The catalysed reaction is RNA(n) + a ribonucleoside 5'-triphosphate = RNA(n+1) + diphosphate. Promotes RNA polymerase assembly. Latches the N- and C-terminal regions of the beta' subunit thereby facilitating its interaction with the beta and alpha subunits. The protein is DNA-directed RNA polymerase subunit omega of Acinetobacter baumannii (strain AB307-0294).